The following is a 293-amino-acid chain: Glycine--tRNA ligase alpha subunit (293 aa).

It belongs to the class-II aminoacyl-tRNA synthetase family. In terms of assembly, tetramer of two alpha and two beta subunits.

It is found in the cytoplasm. The catalysed reaction is tRNA(Gly) + glycine + ATP = glycyl-tRNA(Gly) + AMP + diphosphate. This chain is Glycine--tRNA ligase alpha subunit, found in Picosynechococcus sp. (strain ATCC 27264 / PCC 7002 / PR-6) (Agmenellum quadruplicatum).